The primary structure comprises 341 residues: Dimethylsulfoniopropionate lyase 7 (341 aa).

Basic and acidic residues-rich tracts occupy residues 1–10 (MAGKDRKTIE) and 319–328 (ERKLAKDRQK). Disordered stretches follow at residues 1-24 (MAGK…GGRF) and 319-341 (ERKL…AFDA).

The protein belongs to the aspartate/glutamate racemases family. ALMA1 subfamily. Homotetramer.

It carries out the reaction S,S-dimethyl-beta-propiothetin = acrylate + dimethyl sulfide + H(+). In terms of biological role, mediates cleavage of dimethylsulfoniopropionate (DMSP) into dimethyl sulfide (DMS) and acrylate. DMS is the principal form by which sulfur is transported from oceans to the atmosphere and is a key component of the ocean sulfur cycle. The polypeptide is Dimethylsulfoniopropionate lyase 7 (Emiliania huxleyi (strain CCMP1516)).